Reading from the N-terminus, the 1064-residue chain is Protein NLRC3 (1064 aa).

Residues 138–459 form the NACHT domain; it reads RVSLTIGVAG…YCFIHLSLQE (322 aa). 144-151 provides a ligand contact to ATP; the sequence is GVAGVGKT. LRR repeat units lie at residues 338–362, 570–593, 632–662, 664–687, 692–715, 720–743, 748–771, 776–799, 804–827, 832–855, 860–883, 888–911, 916–939, 972–995, 1000–1022, and 1028–1051; these read LGHL…LCEL, LSEL…TLAG, LPQL…VLSG, DCRI…ALAR, NRSL…ALAD, NRTL…CVAE, NQTI…QMAD, NRSL…ALAE, NQIL…VLMR, NQTL…ALTQ, NNTL…AIAV, NHSL…ALGQ, NRTL…SVAG, NRTL…ALAN, NSSL…IFVA, and NHGL…MISE.

Belongs to the NLRP family. As to quaternary structure, directly interacts (via CARD) with TMEM173/STING; this interaction reduces TMEM173 trafficking to the perinuclear region in response to interferon stimulatory DNA. Also interacts, but to a lesser extent, with TBK1. Interacts with TRAF6; this interaction results in decreased TRAF6 'Lys-63'-linked polyubiquitination, but leaves 'Lys-48'-linked chains unchanged, promoting TRAF6 protein degradation. Interacts with PIK3R1/PIK3R2; this interaction disrupts the association between PIK3R1/PIK3R2 and the p110 catalytic subunit PIK3CA/PIK3CB/PIK3CD and reduces PIK3R1/PIK3R2 activation. Weakly interacts with PYCARD/ASC. Interacts with CASP1 and CASP5. As to expression, expressed in bone marrow-derived macrophages.

It localises to the cytoplasm. Its function is as follows. Negative regulator of the innate immune response. Attenuates signaling pathways activated by Toll-like receptors (TLRs) and the DNA sensor STING/TMEM173 in response to pathogen-associated molecular patterns, such as intracellular poly(dA:dT), but not poly(I:C), or in response to DNA virus infection, including that of Herpes simplex virus 1 (HSV1). May affect TLR4 signaling by acting at the level of TRAF6 ubiquitination, decreasing the activating 'Lys-63'-linked ubiquitination and leaving unchanged the degradative 'Lys-48'-linked ubiquitination. Inhibits the PI3K-AKT-mTOR pathway possibly by directly interacting with the posphatidylinositol 3-kinase regulatory subunit p85 (PIK3R1/PIK3R2) and disrupting the association between PIK3R1/PIK3R2 and the catalytic subunit p110 (PIK3CA/PIK3CB/PIK3CD) and reducing PIK3R1/PIK3R2 activation. Via its regulation of the PI3K-AKT-mTOR pathway, controls cell proliferation, predominantly in intestinal epithelial cells. May also affect NOD1- or NOD2-mediated NF-kappa-B activation. Might also affect the inflammatory response by preventing NLRP3 inflammasome formation, CASP1 cleavage and IL1B maturation. The chain is Protein NLRC3 (Nlrc3) from Mus musculus (Mouse).